We begin with the raw amino-acid sequence, 404 residues long: Argininosuccinate synthase (404 aa).

9–17 (AYSGGLDTS) lines the ATP pocket. Tyr86 contacts L-citrulline. ATP is bound at residue Gly116. 3 residues coordinate L-aspartate: Thr118, Asn122, and Asp123. Asn122 lines the L-citrulline pocket. L-citrulline-binding residues include Arg126, Ser174, Ser183, Glu259, and Tyr271.

This sequence belongs to the argininosuccinate synthase family. Type 1 subfamily. In terms of assembly, homotetramer.

Its subcellular location is the cytoplasm. It catalyses the reaction L-citrulline + L-aspartate + ATP = 2-(N(omega)-L-arginino)succinate + AMP + diphosphate + H(+). The protein operates within amino-acid biosynthesis; L-arginine biosynthesis; L-arginine from L-ornithine and carbamoyl phosphate: step 2/3. The protein is Argininosuccinate synthase of Listeria monocytogenes serovar 1/2a (strain ATCC BAA-679 / EGD-e).